The sequence spans 106 residues: UPF0145 protein MA_3383 (106 aa).

Belongs to the UPF0145 family.

The protein is UPF0145 protein MA_3383 of Methanosarcina acetivorans (strain ATCC 35395 / DSM 2834 / JCM 12185 / C2A).